The sequence spans 284 residues: UTP--glucose-1-phosphate uridylyltransferase (284 aa).

The protein belongs to the UDPGP type 2 family.

It catalyses the reaction alpha-D-glucose 1-phosphate + UTP + H(+) = UDP-alpha-D-glucose + diphosphate. The sequence is that of UTP--glucose-1-phosphate uridylyltransferase (celA) from Komagataeibacter xylinus (Gluconacetobacter xylinus).